Here is a 743-residue protein sequence, read N- to C-terminus: Catalase-peroxidase (743 aa).

Positions 1–15 (MSSDSRPPQPDTSTQ) are enriched in polar residues. The tract at residues 1–40 (MSSDSRPPQPDTSTQSNSESESPAISSPTPQDHAPMTNRD) is disordered. Residues 16–28 (SNSESESPAISSP) show a composition bias toward low complexity. The tryptophyl-tyrosyl-methioninium (Trp-Tyr) (with M-259) cross-link spans 110 to 233 (WHAAGTYRIQ…YGATTMGLIY (124 aa)). The active-site Proton acceptor is H111. The segment at residues 233 to 259 (YVNPEGPEGKPDPVAAAHDIRETFARM) is a cross-link (tryptophyl-tyrosyl-methioninium (Tyr-Met) (with W-110)). H274 contributes to the heme b binding site. Positions 490–511 (DKRGGANGGRLRLEPQKSWESN) are disordered.

It belongs to the peroxidase family. Peroxidase/catalase subfamily. Homodimer or homotetramer. The cofactor is heme b. Formation of the three residue Trp-Tyr-Met cross-link is important for the catalase, but not the peroxidase activity of the enzyme.

The catalysed reaction is H2O2 + AH2 = A + 2 H2O. It carries out the reaction 2 H2O2 = O2 + 2 H2O. Functionally, bifunctional enzyme with both catalase and broad-spectrum peroxidase activity. This chain is Catalase-peroxidase, found in Mycobacterium ulcerans (strain Agy99).